We begin with the raw amino-acid sequence, 279 residues long: MGFADQRFNVNLSILFTELPLLERPAAAAAAGFTAVELWWPWIDSPTPEQSELDALKSAIEDAGVQLTGLNFYAGQLPGPDRGALSIPGEESERFRANIDVAADFARSLGCTALNALYGNRVEGVDPAEQDRLALENLVLAARAADRIGAVLLVEALNKPESPRYPLVSAPAAIAVVDRVNEATGLGNAKFLMDLYHLSMNGEDLPQVIDAYAAKTGHVQIADNPGRGAPGTGSLPLEDLLDRLAKAGYDGWVGLEYKPGDDPSAQSFSWLPAGARAAR.

Catalysis depends on proton donor/acceptor residues E155 and E256. The disordered stretch occupies residues 260-279 (GDDPSAQSFSWLPAGARAAR).

It belongs to the hyi family.

It carries out the reaction 3-hydroxypyruvate = 2-hydroxy-3-oxopropanoate. Its function is as follows. Catalyzes the reversible isomerization between hydroxypyruvate and 2-hydroxy-3-oxopropanoate (also termed tartronate semialdehyde). In Streptomyces coelicolor (strain ATCC BAA-471 / A3(2) / M145), this protein is Putative hydroxypyruvate isomerase.